Here is a 437-residue protein sequence, read N- to C-terminus: tRNA-queuosine alpha-mannosyltransferase (437 aa).

This sequence belongs to the glycosyltransferase group 1 family. Glycosyltransferase 4 subfamily.

The protein resides in the cytoplasm. The protein localises to the nucleus. The catalysed reaction is queuosine(34) in tRNA(Asp) + GDP-alpha-D-mannose = O-4''-alpha-D-mannosylqueuosine(34) in tRNA(Asp) + GDP + H(+). Glycosyltransferase that specifically catalyzes mannosylation of cytoplasmic tRNA(Asp) modified with queuosine at position 34 (queuosine(34)). Mannosylates the cyclopentene moiety of queuosine(34) in tRNA(Asp) to form mannosyl-queuosine(34). Mannosylation of queuosine(34) in tRNA(Asp) is required to slow-down elongation at cognate codons, GAC and GAU, thereby regulating protein translation. In Xenopus laevis (African clawed frog), this protein is tRNA-queuosine alpha-mannosyltransferase (gtdc1).